Here is a 479-residue protein sequence, read N- to C-terminus: Proline--tRNA ligase (479 aa).

It belongs to the class-II aminoacyl-tRNA synthetase family. ProS type 3 subfamily. In terms of assembly, homodimer.

It is found in the cytoplasm. It catalyses the reaction tRNA(Pro) + L-proline + ATP = L-prolyl-tRNA(Pro) + AMP + diphosphate. Functionally, catalyzes the attachment of proline to tRNA(Pro) in a two-step reaction: proline is first activated by ATP to form Pro-AMP and then transferred to the acceptor end of tRNA(Pro). In Mesomycoplasma hyopneumoniae (strain J / ATCC 25934 / NCTC 10110) (Mycoplasma hyopneumoniae), this protein is Proline--tRNA ligase.